The following is a 529-amino-acid chain: Glucocorticoid modulatory element-binding protein 2 (529 aa).

Positions 80–162 (EEGENLEAEI…RKIMDSGELD (83 aa)) constitute an SAND domain. Cysteine 109 contacts Zn(2+). Lysine 135, lysine 139, lysine 142, and arginine 153 together coordinate DNA. A Glycyl lysine isopeptide (Lys-Gly) (interchain with G-Cter in SUMO1); alternate cross-link involves residue lysine 154. A Glycyl lysine isopeptide (Lys-Gly) (interchain with G-Cter in SUMO2); alternate cross-link involves residue lysine 154. 3 residues coordinate Zn(2+): histidine 166, cysteine 170, and cysteine 174. The stretch at 244–347 (LLDEVIQEFQ…HLSNVLMTLT (104 aa)) forms a coiled coil. Serine 372 is modified (phosphoserine).

Homodimer, and heterodimer of GMEB1 and GMEB2. Interacts with the glucocorticoid receptor (NR3C1). May interact with CREB-binding protein (CBP).

The protein resides in the nucleus. The protein localises to the cytoplasm. In terms of biological role, trans-acting factor that binds to glucocorticoid modulatory elements (GME) present in the TAT (tyrosine aminotransferase) promoter and increases sensitivity to low concentrations of glucocorticoids. Also binds to the transferrin receptor promoter. This is Glucocorticoid modulatory element-binding protein 2 (Gmeb2) from Rattus norvegicus (Rat).